Reading from the N-terminus, the 396-residue chain is MAKEKFERTKPHVNVGTIGHVDHGKTTLTAAIATVLSSKFGGEAKKYDEIDAAPEEKARGITINTAHIEYETANRHYAHVDCPGHADYVKNMITGAAQMDGAILVCSAADGPMPQTREHILLARQVGVPYIIVFLNKCDMVDDAELLELVEMEVRELLSKYDFPGDDTPIIKGSAKLALEGDKGELGEVAIMNLADALDSYIPTPERAVDGTFLMPVEDVFSISGRGTVVTGRIERGIIKVGEEIEIVGIKATQKTTCTGVEMFRKLLDQGQAGDNVGILLRGTKREDVERGQVLCKPGSIKPHTHFTGEVYILSKDEGGRHTPFFNNYRPQFYFRTTDVTGSIELPKDKEMVMPGDNVSITVKLIAPIAMEEGLRFAIREGGRTVGAGVVAKIIE.

The region spanning 10–206 is the tr-type G domain; it reads KPHVNVGTIG…ALDSYIPTPE (197 aa). The segment at 19-26 is G1; sequence GHVDHGKT. Residue 19–26 participates in GTP binding; that stretch reads GHVDHGKT. Residue threonine 26 coordinates Mg(2+). The segment at 60-64 is G2; that stretch reads GITIN. The segment at 81–84 is G3; sequence DCPG. Residues 81 to 85 and 136 to 139 each bind GTP; these read DCPGH and NKCD. Residues 136–139 form a G4 region; it reads NKCD. The tract at residues 174–176 is G5; the sequence is SAK.

This sequence belongs to the TRAFAC class translation factor GTPase superfamily. Classic translation factor GTPase family. EF-Tu/EF-1A subfamily. In terms of assembly, monomer.

Its subcellular location is the cytoplasm. It carries out the reaction GTP + H2O = GDP + phosphate + H(+). In terms of biological role, GTP hydrolase that promotes the GTP-dependent binding of aminoacyl-tRNA to the A-site of ribosomes during protein biosynthesis. This is Elongation factor Tu from Ralstonia nicotianae (strain ATCC BAA-1114 / GMI1000) (Ralstonia solanacearum).